A 1035-amino-acid chain; its full sequence is POM121-like protein 2 (1035 aa).

Disordered stretches follow at residues 1-37 (MGSFLSKLELSPSSPAQVRTDLPERPTKRRPPQPLHQ), 177-213 (LFPESLDSKRRSPETRPSAFKPLMKNGTLTSFVPRPG), 286-343 (IKKE…LGYA), 415-508 (LGPL…QSTL), 754-791 (SPLGSSSRPPFPLSQGANPQPAFGATNGQKQGPSQPAL), and 972-1035 (NTPV…AYKK). Basic residues predominate over residues 27 to 37 (TKRRPPQPLHQ). Residues 309–319 (GGSESSGQQNQ) are compositionally biased toward low complexity. 3 stretches are compositionally biased toward polar residues: residues 320 to 330 (KIPQLPSSPEN), 420 to 431 (SPQSTGEATSVA), and 445 to 462 (GCSQSELLPGTSPDSKPT). Low complexity predominate over residues 464–481 (TFILLTPTSPTLPVTDTT). Over residues 493-502 (PMPPDPPAPP) the composition is skewed to pro residues. Residues 1000 to 1016 (RGPFRSSASSFSIGAKS) are compositionally biased toward low complexity. Residues 1017 to 1035 (KTPKNREKGHSRRHHAYKK) show a composition bias toward basic residues.

The protein belongs to the POM121 family.

The polypeptide is POM121-like protein 2 (POM121L2) (Homo sapiens (Human)).